The chain runs to 623 residues: Sulfite reductase [NADPH] flavoprotein alpha-component (623 aa).

Residues 1–32 are disordered; the sequence is MSFQKNEYSHKNVSEDNNGQGGNPPIASPLND. The Flavodoxin-like domain occupies 87–225; the sequence is LTIIFASQTG…AAEEWRKNAL (139 aa). FMN contacts are provided by residues 93–98, 140–143, and 176–185; these read SQTGNA, STNG, and LGDSSYEFFC. The 215-residue stretch at 258–472 folds into the FAD-binding FR-type domain; it reads QNPYTATLLT…VEHNNNFKLP (215 aa). FAD is bound by residues Thr346, Ala380, 410 to 413, 428 to 430, Tyr434, and 443 to 446; these read RLYS, TVG, and GGAS. NADP(+) is bound by residues 543-544, 549-553, and Asp585; these read SR and KVYVQ. An FAD-binding site is contributed by Tyr623.

Belongs to the NADPH-dependent sulphite reductase flavoprotein subunit CysJ family. It in the N-terminal section; belongs to the flavodoxin family. The protein in the C-terminal section; belongs to the flavoprotein pyridine nucleotide cytochrome reductase family. In terms of assembly, alpha(8)-beta(8). The alpha component is a flavoprotein, the beta component is a hemoprotein. It depends on FAD as a cofactor. Requires FMN as cofactor.

It carries out the reaction hydrogen sulfide + 3 NADP(+) + 3 H2O = sulfite + 3 NADPH + 4 H(+). It functions in the pathway sulfur metabolism; hydrogen sulfide biosynthesis; hydrogen sulfide from sulfite (NADPH route): step 1/1. Component of the sulfite reductase complex that catalyzes the 6-electron reduction of sulfite to sulfide. This is one of several activities required for the biosynthesis of L-cysteine from sulfate. The flavoprotein component catalyzes the electron flow from NADPH -&gt; FAD -&gt; FMN to the hemoprotein component. The sequence is that of Sulfite reductase [NADPH] flavoprotein alpha-component from Vibrio parahaemolyticus serotype O3:K6 (strain RIMD 2210633).